The primary structure comprises 188 residues: MGTIADDILDDLHGRILKTLDQLRTELAAVRTGRASLHLLDNVRVDYYGTPTPLNQVATLSVPEARLIVVKPWEKSMIPPIEKAIRDGNLGLNPMSDKDLVRVPIPALTEERRKEIVKQVKHKGEEHKIAVRNVRREAKELIEVAEKDGDISGDDAEKALEKMQKETDDGVKKIDEIVAAKEKDVLQV.

This sequence belongs to the RRF family.

The protein resides in the cytoplasm. Functionally, responsible for the release of ribosomes from messenger RNA at the termination of protein biosynthesis. May increase the efficiency of translation by recycling ribosomes from one round of translation to another. The protein is Ribosome-recycling factor of Anaeromyxobacter dehalogenans (strain 2CP-1 / ATCC BAA-258).